We begin with the raw amino-acid sequence, 836 residues long: MPSLSSKTSTMQRSCRPQMSACPNQQQKDRPVPQLSCVLCRDRKLKCDKLDPCSNCTSSGVACTPIYRPRLPRGRHARTVQTKASTPPDTRRRGSSNESTTAPAPDDGGLGTHIDQLDNLVQDREVSKLGLSGEGNGLQELISLVSDETMPATAWSTHCFGTISRILSSRIRRLESLVQETARIQTPKRARKPMTPVVVQWYSAPLAGCNWNRMVVQTPQGLEVQQFPAPPTSYSARRSPELSGNDIWADLMDHDMHDPPQYNALELPPDLTNEGGVDNMGSSGRDDPINNGFNALRLLGINNSLSPSFISLPRDRLSASKLCQVYLQNVDPIIKILHRPSLSRWMVDGAPTYLGSSEDDYAVKALESAVCYTAANTMTEHQCQAAFQKTKSSIMAVRRKMCEDALENAGLLTTRDMTVLQAFILYLVTPTDLSKIGRRSEDKDTAVWALVALAIRLIKAMGLNQEPSEGARKGESFFQQQLRLRLWLTACLIDLQASFAQATDPLITHRDAACAVPYVANINDSDFDVDTAHPVASHEELTDTTFALVTYRVQVAGRLFNFGPGCSTAAERHKLAQEVQQQVFTLLHYCDPESSSYAWFTWHSTQSIIFAVRLSELLPFRCGQPGGHVPPPSPRAEGDTTLLWRALQNLEKAQLIRADPRGDGFRWYITTPWLALSTAISECNSCTDVALVCRAWPVIEISYRQHEELQISDECQLPQGPLVHLMNKTREKLAPLLQEGGARLSDSQTVDRASADSLQPPVPVGSIPIDPLLTNGSLGADTAMSEASSIGSLPPFEQQCWKQMTMPTDGAPVRDGVVFTSELYNPLQSDFLNSHG.

The segment covering 1-26 has biased composition (polar residues); that stretch reads MPSLSSKTSTMQRSCRPQMSACPNQQ. Positions 1-29 are disordered; it reads MPSLSSKTSTMQRSCRPQMSACPNQQQKD. The segment at residues 37–63 is a DNA-binding region (zn(2)-C6 fungal-type); it reads CVLCRDRKLKCDKLDPCSNCTSSGVAC. Residues 72–114 form a disordered region; that stretch reads PRGRHARTVQTKASTPPDTRRRGSSNESTTAPAPDDGGLGTHI. The segment covering 79 to 88 has biased composition (polar residues); sequence TVQTKASTPP.

The protein localises to the nucleus. Its function is as follows. Probable transcription factor that regulates expression of the gene cluster that mediates the biosynthesis of viridicatumtoxin, a tetracycline-like fungal meroterpenoid with a unique, fused spirobicyclic ring system. This is Transcription factor vrtR2 from Penicillium aethiopicum.